Here is a 502-residue protein sequence, read N- to C-terminus: NAD(P)H-quinone oxidoreductase chain 4, chloroplastic (502 aa).

14 consecutive transmembrane segments (helical) span residues 4 to 24 (FPWL…IFFL), 37 to 57 (ISIC…HFQL), 87 to 107 (LGSI…AWPV), 113 to 130 (LFYF…GLFS), 134 to 154 (LLLF…LLSM), 167 to 187 (FILY…GMGL), 213 to 233 (ILLY…IPLH), 244 to 264 (HYST…YGLI), 274 to 294 (AHYL…IYAA), 315 to 335 (MGFI…GAIL), 336 to 356 (QILS…TASD), 388 to 408 (LALP…GLIT), 419 to 439 (LITF…LSML), and 464 to 484 (LFIL…PDFV).

This sequence belongs to the complex I subunit 4 family.

The protein localises to the plastid. Its subcellular location is the chloroplast thylakoid membrane. It carries out the reaction a plastoquinone + NADH + (n+1) H(+)(in) = a plastoquinol + NAD(+) + n H(+)(out). The enzyme catalyses a plastoquinone + NADPH + (n+1) H(+)(in) = a plastoquinol + NADP(+) + n H(+)(out). The polypeptide is NAD(P)H-quinone oxidoreductase chain 4, chloroplastic (Lolium perenne (Perennial ryegrass)).